Here is a 260-residue protein sequence, read N- to C-terminus: Triosephosphate isomerase (260 aa).

11–13 lines the substrate pocket; it reads NWK. The Electrophile role is filled by His103. Residue Glu175 is the Proton acceptor of the active site. Residues Gly181, Ser220, and 241–242 contribute to the substrate site; that span reads GG.

The protein belongs to the triosephosphate isomerase family. In terms of assembly, homodimer.

The protein localises to the cytoplasm. It carries out the reaction D-glyceraldehyde 3-phosphate = dihydroxyacetone phosphate. It participates in carbohydrate biosynthesis; gluconeogenesis. The protein operates within carbohydrate degradation; glycolysis; D-glyceraldehyde 3-phosphate from glycerone phosphate: step 1/1. In terms of biological role, involved in the gluconeogenesis. Catalyzes stereospecifically the conversion of dihydroxyacetone phosphate (DHAP) to D-glyceraldehyde-3-phosphate (G3P). The chain is Triosephosphate isomerase from Shewanella pealeana (strain ATCC 700345 / ANG-SQ1).